The sequence spans 200 residues: Probable GTP-binding protein EngB (200 aa).

The region spanning 26–200 is the EngB-type G domain; sequence SIPEIAIAGR…IYEIAQCIKK (175 aa). GTP contacts are provided by residues 34–41, 61–65, 80–83, 147–150, and 179–181; these read GRSNVGKS, GCTKQ, DLPG, TKID, and TSS. 2 residues coordinate Mg(2+): S41 and T63.

It belongs to the TRAFAC class TrmE-Era-EngA-EngB-Septin-like GTPase superfamily. EngB GTPase family. The cofactor is Mg(2+).

In terms of biological role, necessary for normal cell division and for the maintenance of normal septation. This is Probable GTP-binding protein EngB from Ehrlichia chaffeensis (strain ATCC CRL-10679 / Arkansas).